The primary structure comprises 160 residues: Invasion protein IagB (160 aa).

Residues 1 to 19 (MHYFFIIVIWLLSINTAWA) form the signal peptide.

The protein belongs to the IagB/IpgF/P19 family.

This Salmonella typhi protein is Invasion protein IagB (iagB).